The sequence spans 207 residues: dTTP/UTP pyrophosphatase (207 aa).

Catalysis depends on Asp79, which acts as the Proton acceptor.

This sequence belongs to the Maf family. YhdE subfamily. A divalent metal cation serves as cofactor.

Its subcellular location is the cytoplasm. The catalysed reaction is dTTP + H2O = dTMP + diphosphate + H(+). It catalyses the reaction UTP + H2O = UMP + diphosphate + H(+). In terms of biological role, nucleoside triphosphate pyrophosphatase that hydrolyzes dTTP and UTP. May have a dual role in cell division arrest and in preventing the incorporation of modified nucleotides into cellular nucleic acids. This is dTTP/UTP pyrophosphatase from Rhodopseudomonas palustris (strain HaA2).